Consider the following 338-residue polypeptide: DNA-directed RNA polymerase subunit alpha (338 aa).

Positions 1–234 are alpha N-terminal domain (alpha-NTD); that stretch reads MIQKNWQELI…DQLEIFVNFE (234 aa). The tract at residues 250–338 is alpha C-terminal domain (alpha-CTD); sequence FSPALLKKVD…ELAKRFEEHY (89 aa).

The protein belongs to the RNA polymerase alpha chain family. As to quaternary structure, homodimer. The RNAP catalytic core consists of 2 alpha, 1 beta, 1 beta' and 1 omega subunit. When a sigma factor is associated with the core the holoenzyme is formed, which can initiate transcription.

The enzyme catalyses RNA(n) + a ribonucleoside 5'-triphosphate = RNA(n+1) + diphosphate. Its function is as follows. DNA-dependent RNA polymerase catalyzes the transcription of DNA into RNA using the four ribonucleoside triphosphates as substrates. The protein is DNA-directed RNA polymerase subunit alpha of Xanthobacter autotrophicus (strain ATCC BAA-1158 / Py2).